A 305-amino-acid chain; its full sequence is Glycine--tRNA ligase alpha subunit (305 aa).

It belongs to the class-II aminoacyl-tRNA synthetase family. Tetramer of two alpha and two beta subunits.

It is found in the cytoplasm. It carries out the reaction tRNA(Gly) + glycine + ATP = glycyl-tRNA(Gly) + AMP + diphosphate. This chain is Glycine--tRNA ligase alpha subunit, found in Streptococcus pneumoniae (strain P1031).